The following is a 298-amino-acid chain: N-acetylmuramic acid 6-phosphate etherase (298 aa).

The region spanning Ile55 to Lys218 is the SIS domain. The active-site Proton donor is Glu83. The active site involves Glu114.

Belongs to the GCKR-like family. MurNAc-6-P etherase subfamily. In terms of assembly, homodimer.

It carries out the reaction N-acetyl-D-muramate 6-phosphate + H2O = N-acetyl-D-glucosamine 6-phosphate + (R)-lactate. It participates in amino-sugar metabolism; 1,6-anhydro-N-acetylmuramate degradation. The protein operates within amino-sugar metabolism; N-acetylmuramate degradation. It functions in the pathway cell wall biogenesis; peptidoglycan recycling. Specifically catalyzes the cleavage of the D-lactyl ether substituent of MurNAc 6-phosphate, producing GlcNAc 6-phosphate and D-lactate. Together with AnmK, is also required for the utilization of anhydro-N-acetylmuramic acid (anhMurNAc) either imported from the medium or derived from its own cell wall murein, and thus plays a role in cell wall recycling. In Escherichia coli O17:K52:H18 (strain UMN026 / ExPEC), this protein is N-acetylmuramic acid 6-phosphate etherase.